We begin with the raw amino-acid sequence, 284 residues long: L-ribulose-5-phosphate 3-epimerase UlaE (284 aa).

It belongs to the L-ribulose-5-phosphate 3-epimerase family.

It catalyses the reaction L-ribulose 5-phosphate = L-xylulose 5-phosphate. The protein operates within cofactor degradation; L-ascorbate degradation; D-xylulose 5-phosphate from L-ascorbate: step 3/4. Catalyzes the isomerization of L-xylulose-5-phosphate to L-ribulose-5-phosphate. Is involved in the anaerobic L-ascorbate utilization. This Shigella flexneri protein is L-ribulose-5-phosphate 3-epimerase UlaE.